The sequence spans 376 residues: Non-structural protein NS2 (376 aa).

Positions Glu-163–Asp-188 are enriched in basic and acidic residues. Residues Glu-163 to Asn-201 are disordered.

Belongs to the orbivirus non-structural protein NS2 family.

In terms of biological role, single-stranded RNA-binding protein. This chain is Non-structural protein NS2 (Segment-8), found in Antilocapra americana (Pronghorn).